The following is a 220-amino-acid chain: tRNA (guanine-N(7)-)-methyltransferase (220 aa).

Positions 44, 69, 96, and 118 each coordinate S-adenosyl-L-methionine. The active site involves Asp-118. Lys-122 serves as a coordination point for substrate. Positions 124-129 (RHEKRR) are interaction with RNA. Residues Asp-154 and 191-194 (TEYE) contribute to the substrate site.

Belongs to the class I-like SAM-binding methyltransferase superfamily. TrmB family.

The catalysed reaction is guanosine(46) in tRNA + S-adenosyl-L-methionine = N(7)-methylguanosine(46) in tRNA + S-adenosyl-L-homocysteine. It participates in tRNA modification; N(7)-methylguanine-tRNA biosynthesis. Catalyzes the formation of N(7)-methylguanine at position 46 (m7G46) in tRNA. The chain is tRNA (guanine-N(7)-)-methyltransferase from Halalkalibacterium halodurans (strain ATCC BAA-125 / DSM 18197 / FERM 7344 / JCM 9153 / C-125) (Bacillus halodurans).